The sequence spans 197 residues: Large ribosomal subunit protein eL15 (197 aa).

The tract at residues 175-197 (LRTGRKGSSKSRPSIRANGRLRR) is disordered.

It belongs to the eukaryotic ribosomal protein eL15 family.

This chain is Large ribosomal subunit protein eL15 (rpl15e), found in Thermoplasma volcanium (strain ATCC 51530 / DSM 4299 / JCM 9571 / NBRC 15438 / GSS1).